We begin with the raw amino-acid sequence, 136 residues long: Transcription antitermination protein NusB (136 aa).

The protein belongs to the NusB family.

Its function is as follows. Involved in transcription antitermination. Required for transcription of ribosomal RNA (rRNA) genes. Binds specifically to the boxA antiterminator sequence of the ribosomal RNA (rrn) operons. In Treponema denticola (strain ATCC 35405 / DSM 14222 / CIP 103919 / JCM 8153 / KCTC 15104), this protein is Transcription antitermination protein NusB.